The sequence spans 104 residues: ATP-dependent Clp protease adapter protein ClpS (104 aa).

The disordered stretch occupies residues 1–20 (MAEETPTRSPGGAAVLDKAP).

Belongs to the ClpS family. As to quaternary structure, binds to the N-terminal domain of the chaperone ClpA.

Functionally, involved in the modulation of the specificity of the ClpAP-mediated ATP-dependent protein degradation. This Synechococcus sp. (strain CC9902) protein is ATP-dependent Clp protease adapter protein ClpS.